A 424-amino-acid chain; its full sequence is Tyrosine--tRNA ligase (424 aa).

Tyrosine 37 serves as a coordination point for L-tyrosine. The 'HIGH' region motif lies at isoleucine 42–histidine 51. L-tyrosine-binding residues include tyrosine 175 and glutamine 179. The 'KMSKS' region motif lies at lysine 235 to threonine 239. Residue lysine 238 coordinates ATP. Residues glycine 356–lysine 414 form the S4 RNA-binding domain.

It belongs to the class-I aminoacyl-tRNA synthetase family. TyrS type 1 subfamily. In terms of assembly, homodimer.

The protein resides in the cytoplasm. It carries out the reaction tRNA(Tyr) + L-tyrosine + ATP = L-tyrosyl-tRNA(Tyr) + AMP + diphosphate + H(+). Functionally, catalyzes the attachment of tyrosine to tRNA(Tyr) in a two-step reaction: tyrosine is first activated by ATP to form Tyr-AMP and then transferred to the acceptor end of tRNA(Tyr). This Buchnera aphidicola subsp. Baizongia pistaciae (strain Bp) protein is Tyrosine--tRNA ligase.